The chain runs to 161 residues: Nucleotide-binding protein Sfri_0732 (161 aa).

It belongs to the YajQ family.

In terms of biological role, nucleotide-binding protein. This chain is Nucleotide-binding protein Sfri_0732, found in Shewanella frigidimarina (strain NCIMB 400).